A 114-amino-acid chain; its full sequence is Small ribosomal subunit protein bS6 (114 aa).

It belongs to the bacterial ribosomal protein bS6 family.

Binds together with bS18 to 16S ribosomal RNA. This is Small ribosomal subunit protein bS6 from Bacteroides thetaiotaomicron (strain ATCC 29148 / DSM 2079 / JCM 5827 / CCUG 10774 / NCTC 10582 / VPI-5482 / E50).